Here is a 287-residue protein sequence, read N- to C-terminus: L-ascorbate peroxidase 3 (287 aa).

N-acetylalanine is present on Ala2. His40 (proton acceptor) is an active-site residue. The tract at residues Asp46–His66 is disordered. Heme b is bound at residue His160. Residues Thr161, Thr177, and Asp184 each contribute to the K(+) site. The helical transmembrane segment at Ile259–Phe279 threads the bilayer. The AKR2A-binding sequence (ABS) required for peroxisome membrane targeting signature appears at Glu281–Lys287.

This sequence belongs to the peroxidase family. Ascorbate peroxidase subfamily. Interacts via its C-terminal region with AKR2A and AKR2B. The cofactor is heme b.

The protein localises to the peroxisome membrane. The protein resides in the glyoxysome membrane. The catalysed reaction is L-ascorbate + H2O2 = L-dehydroascorbate + 2 H2O. Functionally, plays a key role in hydrogen peroxide removal. This chain is L-ascorbate peroxidase 3 (APX3), found in Arabidopsis thaliana (Mouse-ear cress).